The sequence spans 230 residues: Ion-translocating oxidoreductase complex subunit E (230 aa).

The next 6 helical transmembrane spans lie at 18–38 (ALVQ…ATNA), 39–59 (LGLG…ISAL), 63–83 (TPAE…VSAV), 86–106 (LINA…PLIV), 125–145 (ALSA…MFVL), and 182–202 (PFLL…MLAV).

This sequence belongs to the NqrDE/RnfAE family. In terms of assembly, the complex is composed of six subunits: RnfA, RnfB, RnfC, RnfD, RnfE and RnfG.

The protein localises to the cell inner membrane. Functionally, part of a membrane-bound complex that couples electron transfer with translocation of ions across the membrane. The sequence is that of Ion-translocating oxidoreductase complex subunit E from Citrobacter koseri (strain ATCC BAA-895 / CDC 4225-83 / SGSC4696).